We begin with the raw amino-acid sequence, 336 residues long: Adenylate isopentenyltransferase 3, chloroplastic (336 aa).

The transit peptide at 1–55 directs the protein to the chloroplast; it reads MIMKISMAMCKQPLPPSPTLDFPPARFGPNMLTLNPYGPKDKVVVIMGATGTGKS. ATP is bound at residue 48–55; sequence GATGTGKS. Cysteine 333 bears the Cysteine methyl ester mark. Cysteine 333 is lipidated: S-farnesyl cysteine. A propeptide spans 334-336 (removed in mature form); that stretch reads LVA.

The protein belongs to the IPP transferase family. In terms of processing, farnesylated. In terms of tissue distribution, expressed the phloem companion cells.

The protein resides in the plastid. It is found in the chloroplast. Its subcellular location is the nucleus membrane. It localises to the cytoplasm. The enzyme catalyses dimethylallyl diphosphate + ADP = N(6)-(dimethylallyl)adenosine 5'-diphosphate + diphosphate. It carries out the reaction dimethylallyl diphosphate + ATP = N(6)-(dimethylallyl)adenosine 5'-triphosphate + diphosphate. Involved in cytokinin biosynthesis. Catalyzes the transfer of an isopentenyl group from dimethylallyl diphosphate (DMAPP) to ATP and ADP. In Arabidopsis thaliana (Mouse-ear cress), this protein is Adenylate isopentenyltransferase 3, chloroplastic (IPT3).